The sequence spans 480 residues: Sensor histidine kinase CusS (480 aa).

Over 1–15 (MVSKPFQRPFSLATR) the chain is Cytoplasmic. A helical transmembrane segment spans residues 16 to 36 (LTFFISLATIAAFFAFAWIMI). Topologically, residues 37–186 (HSVKVHFAEQ…LHYINDLMNK (150 aa)) are periplasmic. The helical transmembrane segment at 187 to 207 (LIMTASVISILIVFIVLLAVH) threads the bilayer. Positions 208 to 260 (KGHAPIRSVSRQIQNITSKDLDVRLDPQTVPIELEQLVLSFNHMIERIEDVFT) constitute an HAMP domain. At 208–480 (KGHAPIRSVS…GTRFVITLPA (273 aa)) the chain is on the cytoplasmic side. The Histidine kinase domain occupies 268–480 (DIAHEIRTPI…GTRFVITLPA (213 aa)). H271 carries the phosphohistidine; by autocatalysis modification.

Post-translationally, autophosphorylated.

The protein localises to the cell inner membrane. It catalyses the reaction ATP + protein L-histidine = ADP + protein N-phospho-L-histidine.. Member of the two-component regulatory system CusS/CusR involved in response to copper and silver. Acts as a copper/silver ion sensor. Activates CusR by phosphorylation. This Escherichia coli (strain K12) protein is Sensor histidine kinase CusS (cusS).